The following is a 25-amino-acid chain: Nicotinic acetylcholine receptor-binding protein Mnn-4 (25 aa).

The cysteines at positions 3 and 20 are disulfide-linked.

Belongs to the three-finger toxin family. Short-chain subfamily. In terms of tissue distribution, expressed by the venom gland.

It is found in the secreted. In terms of biological role, binds and may inhibit nicotinic acetylcholine receptors (nAChR). The sequence is that of Nicotinic acetylcholine receptor-binding protein Mnn-4 from Micrurus nigrocinctus (Central American coral snake).